Consider the following 257-residue polypeptide: Ribonuclease PH (257 aa).

Phosphate-binding positions include Arg-87 and 125–127 (GTR).

Belongs to the RNase PH family. In terms of assembly, homohexameric ring arranged as a trimer of dimers.

The enzyme catalyses tRNA(n+1) + phosphate = tRNA(n) + a ribonucleoside 5'-diphosphate. Phosphorolytic 3'-5' exoribonuclease that plays an important role in tRNA 3'-end maturation. Removes nucleotide residues following the 3'-CCA terminus of tRNAs; can also add nucleotides to the ends of RNA molecules by using nucleoside diphosphates as substrates, but this may not be physiologically important. Probably plays a role in initiation of 16S rRNA degradation (leading to ribosome degradation) during starvation. The protein is Ribonuclease PH of Geobacillus kaustophilus (strain HTA426).